A 353-amino-acid chain; its full sequence is Photosystem II D2 protein (353 aa).

Threonine 2 bears the N-acetylthreonine mark. At threonine 2 the chain carries Phosphothreonine. Residues 41 to 61 (CAYFAVGGWFTGTTFVTSWYT) form a helical membrane-spanning segment. Histidine 118 contacts chlorophyll a. The chain crosses the membrane as a helical span at residues 125–141 (GFMLRQFELARSVQLRP). Glutamine 130 and asparagine 143 together coordinate pheophytin a. Residues 153–166 (VFVSVFLIYPLGQS) form a helical membrane-spanning segment. Histidine 198 contributes to the chlorophyll a binding site. Residues 208 to 228 (AALLCAIHGATVENTLFEDGD) traverse the membrane as a helical segment. Residues histidine 215 and phenylalanine 262 each coordinate a plastoquinone. Histidine 215 is a Fe cation binding site. Histidine 269 provides a ligand contact to Fe cation. The helical transmembrane segment at 279-295 (GLWMSALGVVGLALNLR) threads the bilayer.

Belongs to the reaction center PufL/M/PsbA/D family. In terms of assembly, PSII is composed of 1 copy each of membrane proteins PsbA, PsbB, PsbC, PsbD, PsbE, PsbF, PsbH, PsbI, PsbJ, PsbK, PsbL, PsbM, PsbT, PsbX, PsbY, PsbZ, Psb30/Ycf12, at least 3 peripheral proteins of the oxygen-evolving complex and a large number of cofactors. It forms dimeric complexes. Requires The D1/D2 heterodimer binds P680, chlorophylls that are the primary electron donor of PSII, and subsequent electron acceptors. It shares a non-heme iron and each subunit binds pheophytin, quinone, additional chlorophylls, carotenoids and lipids. There is also a Cl(-1) ion associated with D1 and D2, which is required for oxygen evolution. The PSII complex binds additional chlorophylls, carotenoids and specific lipids. as cofactor.

It localises to the plastid. Its subcellular location is the chloroplast thylakoid membrane. It catalyses the reaction 2 a plastoquinone + 4 hnu + 2 H2O = 2 a plastoquinol + O2. Photosystem II (PSII) is a light-driven water:plastoquinone oxidoreductase that uses light energy to abstract electrons from H(2)O, generating O(2) and a proton gradient subsequently used for ATP formation. It consists of a core antenna complex that captures photons, and an electron transfer chain that converts photonic excitation into a charge separation. The D1/D2 (PsbA/PsbD) reaction center heterodimer binds P680, the primary electron donor of PSII as well as several subsequent electron acceptors. D2 is needed for assembly of a stable PSII complex. The sequence is that of Photosystem II D2 protein from Lactuca sativa (Garden lettuce).